Reading from the N-terminus, the 128-residue chain is Large ribosomal subunit protein bL12c (128 aa).

The tract at residues 103 to 128 is disordered; the sequence is QEGLGKDAAEDAKKQIEDAGGKVSLT. Positions 106–122 are enriched in basic and acidic residues; it reads LGKDAAEDAKKQIEDAG.

The protein belongs to the bacterial ribosomal protein bL12 family. In terms of assembly, homodimer. Part of the ribosomal stalk of the 50S ribosomal subunit. Forms a multimeric L10(L12)X complex, where L10 forms an elongated spine to which 2 to 4 L12 dimers bind in a sequential fashion. Binds GTP-bound translation factors.

It is found in the plastid. It localises to the chloroplast. Forms part of the ribosomal stalk which helps the ribosome interact with GTP-bound translation factors. Is thus essential for accurate translation. In Thalassiosira pseudonana (Marine diatom), this protein is Large ribosomal subunit protein bL12c.